We begin with the raw amino-acid sequence, 601 residues long: Alpha-terpineol synthase, chloroplastic (601 aa).

Residues 1-47 (MSTISIHHVGILRNPLHSKSKRASINKPWSLSLPRSSSASRLVEPCR) constitute a chloroplast transit peptide. Asp-357 and Asp-361 together coordinate Mn(2+). The short motif at 357 to 361 (DDVYD) is the DDXXD motif element. Homodimerization stretches follow at residues 363-369 (YGTLDEL) and 435-471 (EAEW…ELSL). Positions 499 and 507 each coordinate Mn(2+).

Belongs to the terpene synthase family. Homodimer. It depends on Mn(2+) as a cofactor. Requires Mg(2+) as cofactor.

It localises to the plastid. It is found in the chloroplast. It carries out the reaction (2E)-geranyl diphosphate + H2O = (S)-alpha-terpineol + diphosphate. It catalyses the reaction (2E)-geranyl diphosphate + H2O = (R)-alpha-terpineol + diphosphate. It participates in secondary metabolite biosynthesis; terpenoid biosynthesis. Its function is as follows. Involved in the biosynthesis of phenolic monoterpenes natural products. Monoterpene synthase which catalyzes the conversion of geranyl diphosphate (GPP) to alpha-terpineol (isomer is not determined). This Thymus caespititius (Cretan thyme) protein is Alpha-terpineol synthase, chloroplastic.